The primary structure comprises 130 residues: Glycine cleavage system H protein (130 aa).

In terms of domain architecture, Lipoyl-binding spans 24–106 (TVTIGITDHA…YDDGWFFKVK (83 aa)). Lys65 carries the post-translational modification N6-lipoyllysine.

It belongs to the GcvH family. The glycine cleavage system is composed of four proteins: P, T, L and H. Requires (R)-lipoate as cofactor.

Its function is as follows. The glycine cleavage system catalyzes the degradation of glycine. The H protein shuttles the methylamine group of glycine from the P protein to the T protein. This chain is Glycine cleavage system H protein, found in Saccharophagus degradans (strain 2-40 / ATCC 43961 / DSM 17024).